We begin with the raw amino-acid sequence, 382 residues long: Alkanesulfonate monooxygenase (382 aa).

It belongs to the SsuD family.

It carries out the reaction an alkanesulfonate + FMNH2 + O2 = an aldehyde + FMN + sulfite + H2O + 2 H(+). In terms of biological role, catalyzes the desulfonation of aliphatic sulfonates. In Pseudomonas putida (strain W619), this protein is Alkanesulfonate monooxygenase.